We begin with the raw amino-acid sequence, 503 residues long: TGF-beta receptor type-1 (503 aa).

Positions Met1 to Ala29 are cleaved as a signal peptide. The Extracellular portion of the chain corresponds to Leu30 to Leu126. 5 disulfide bridges follow: Cys32–Cys50, Cys34–Cys37, Cys44–Cys67, Cys82–Cys96, and Cys97–Cys102. N-linked (GlcNAc...) asparagine glycosylation is present at Asn41. A helical transmembrane segment spans residues Ala127–Ile147. The Cytoplasmic segment spans residues Cys148–Met503. At Ser165 the chain carries Phosphoserine. The GS domain maps to Thr175–Thr204. Phosphothreonine; by TGFBR2 is present on residues Thr185 and Thr186. Residues Ser187, Ser189, and Ser191 each carry the phosphoserine; by TGFBR2 modification. An FKBP1A-binding motif is present at residues Leu193–Pro194. The Protein kinase domain occupies Ile205 to Leu495. ATP-binding positions include Ile211–Val219 and Lys232. Lys268 is covalently cross-linked (Glycyl lysine isopeptide (Lys-Gly) (interchain with G-Cter in ubiquitin)). The active-site Proton acceptor is Asp333. A Glycyl lysine isopeptide (Lys-Gly) (interchain with G-Cter in SUMO) cross-link involves residue Lys391.

It belongs to the protein kinase superfamily. TKL Ser/Thr protein kinase family. TGFB receptor subfamily. Homodimer; in the endoplasmic reticulum but also at the cell membrane. Heterohexamer; TGFB1, TGFB2 and TGFB3 homodimeric ligands assemble a functional receptor composed of two TGFBR1 and TGFBR2 heterodimers to form a ligand-receptor heterohexamer. The respective affinity of TGBRB1 and TGFBR2 for the ligands may modulate the kinetics of assembly of the receptor and may explain the different biological activities of TGFB1, TGFB2 and TGFB3. Component of a complex composed of TSC22D1 (via N-terminus), TGFBR1 and TGFBR2; the interaction between TSC22D1 and TGFBR1 is inhibited by SMAD7 and promoted by TGFB1. Interacts with CD109; inhibits TGF-beta receptor activation in keratinocytes. Interacts with RBPMS. Interacts (unphosphorylated) with FKBP1A; prevents TGFBR1 phosphorylation by TGFBR2 and stabilizes it in the inactive conformation. Interacts with SMAD2, SMAD3 and ZFYVE9; ZFYVE9 recruits SMAD2 and SMAD3 to the TGF-beta receptor. Interacts with TRAF6 and MAP3K7; induces MAP3K7 activation by TRAF6. Interacts with PARD6A; involved in TGF-beta induced epithelial to mesenchymal transition. Interacts with NEDD4L. Interacts with SMAD7, SMURF1 and SMURF2; SMAD7 recruits NEDD4L, SMURF1 and SMURF2 to the TGF-beta receptor. Interacts with USP15 and VPS39. Interacts with SDCBP (via C-terminus). Interacts with CAV1 and this interaction is impaired in the presence of SDCBP. Interacts with APPL1; interaction is TGF beta dependent; mediates trafficking of the TGFBR1 from the endosomes to the nucleus via microtubules in a TRAF6-dependent manner. Interacts with GPR50; this interaction promotes the constitutive activation of SMAD signaling pathway. Mg(2+) is required as a cofactor. Mn(2+) serves as cofactor. Post-translationally, phosphorylated at basal levels in the absence of ligand. Activated upon phosphorylation by TGFBR2, mainly in the GS domain. Phosphorylation in the GS domain abrogates FKBP1A-binding. In terms of processing, N-Glycosylated. Ubiquitinated; undergoes ubiquitination catalyzed by several E3 ubiquitin ligases including SMURF1, SMURF2 and NEDD4L2. Results in the proteasomal and/or lysosomal degradation of the receptor thereby negatively regulating its activity. Deubiquitinated by USP15, leading to stabilization of the protein and enhanced TGF-beta signal. Its ubiquitination and proteasome-mediated degradation is negatively regulated by SDCBP. Ubiquitinated by BFAR via'Lys-63'-linked ubiquitination at Lys-268, leading to TGF-beta signaling activation.

The protein resides in the cell membrane. It localises to the cell junction. It is found in the tight junction. Its subcellular location is the membrane raft. The protein localises to the cell surface. The enzyme catalyses L-threonyl-[receptor-protein] + ATP = O-phospho-L-threonyl-[receptor-protein] + ADP + H(+). The catalysed reaction is L-seryl-[receptor-protein] + ATP = O-phospho-L-seryl-[receptor-protein] + ADP + H(+). With respect to regulation, kept in an inactive conformation by FKBP1A preventing receptor activation in absence of ligand. CD109 is another inhibitor of the receptor. Its function is as follows. Transmembrane serine/threonine kinase forming with the TGF-beta type II serine/threonine kinase receptor, TGFBR2, the non-promiscuous receptor for the TGF-beta cytokines TGFB1, TGFB2 and TGFB3. Transduces the TGFB1, TGFB2 and TGFB3 signal from the cell surface to the cytoplasm and is thus regulating a plethora of physiological and pathological processes including cell cycle arrest in epithelial and hematopoietic cells, control of mesenchymal cell proliferation and differentiation, wound healing, extracellular matrix production, immunosuppression and carcinogenesis. The formation of the receptor complex composed of 2 TGFBR1 and 2 TGFBR2 molecules symmetrically bound to the cytokine dimer results in the phosphorylation and the activation of TGFBR1 by the constitutively active TGFBR2. Activated TGFBR1 phosphorylates SMAD2 which dissociates from the receptor and interacts with SMAD4. The SMAD2-SMAD4 complex is subsequently translocated to the nucleus where it modulates the transcription of the TGF-beta-regulated genes. This constitutes the canonical SMAD-dependent TGF-beta signaling cascade. Also involved in non-canonical, SMAD-independent TGF-beta signaling pathways. For instance, TGFBR1 induces TRAF6 autoubiquitination which in turn results in MAP3K7 ubiquitination and activation to trigger apoptosis. Also regulates epithelial to mesenchymal transition through a SMAD-independent signaling pathway through PARD6A phosphorylation and activation. The chain is TGF-beta receptor type-1 (Tgfbr1) from Mus musculus (Mouse).